A 428-amino-acid chain; its full sequence is Dihydroorotase (428 aa).

Zn(2+) is bound by residues His-59 and His-61. Substrate-binding positions include 61 to 63 (HLR) and Asn-93. Asp-151, His-178, and His-231 together coordinate Zn(2+). Asn-277 lines the substrate pocket. Asp-304 provides a ligand contact to Zn(2+). The active site involves Asp-304. Residues His-308 and 322–323 (FG) contribute to the substrate site.

The protein belongs to the metallo-dependent hydrolases superfamily. DHOase family. Class I DHOase subfamily. The cofactor is Zn(2+).

It carries out the reaction (S)-dihydroorotate + H2O = N-carbamoyl-L-aspartate + H(+). It participates in pyrimidine metabolism; UMP biosynthesis via de novo pathway; (S)-dihydroorotate from bicarbonate: step 3/3. Catalyzes the reversible cyclization of carbamoyl aspartate to dihydroorotate. The polypeptide is Dihydroorotase (Bacillus cereus (strain ZK / E33L)).